The sequence spans 236 residues: RING-H2 finger protein ATL7 (236 aa).

A helical transmembrane segment spans residues 31–51; it reads AFIFSVPICFTFIVLFVLYVI. The RING-type; atypical zinc finger occupies 111-153; the sequence is CSVCLGDYQAEEKLQQMPSCGHTFHMECIDLWLTSHTTCPLCR. Positions 176-196 are enriched in polar residues; sequence ENSNGGEASTQPDSQSATEAI. Residues 176-236 are disordered; the sequence is ENSNGGEAST…SDGCCTCRLG (61 aa). Residues 197-221 are compositionally biased toward basic and acidic residues; sequence SHTDDVEEGNRDSQEVSKETEENDR.

This sequence belongs to the RING-type zinc finger family. ATL subfamily.

It localises to the membrane. The catalysed reaction is S-ubiquitinyl-[E2 ubiquitin-conjugating enzyme]-L-cysteine + [acceptor protein]-L-lysine = [E2 ubiquitin-conjugating enzyme]-L-cysteine + N(6)-ubiquitinyl-[acceptor protein]-L-lysine.. It functions in the pathway protein modification; protein ubiquitination. This is RING-H2 finger protein ATL7 (ATL7) from Arabidopsis thaliana (Mouse-ear cress).